Here is a 229-residue protein sequence, read N- to C-terminus: Flagellar L-ring protein (229 aa).

A signal peptide spans 1–23 (MNPLTRVALAVAAFAALVLALSA). A lipid anchor (N-palmitoyl cysteine) is attached at cysteine 24. Cysteine 24 is lipidated: S-diacylglycerol cysteine.

This sequence belongs to the FlgH family. The basal body constitutes a major portion of the flagellar organelle and consists of four rings (L,P,S, and M) mounted on a central rod.

The protein localises to the cell outer membrane. The protein resides in the bacterial flagellum basal body. Its function is as follows. Assembles around the rod to form the L-ring and probably protects the motor/basal body from shearing forces during rotation. The sequence is that of Flagellar L-ring protein from Anaeromyxobacter dehalogenans (strain 2CP-1 / ATCC BAA-258).